A 213-amino-acid polypeptide reads, in one-letter code: 3-dehydroquinate dehydratase (213 aa).

3-dehydroquinate is bound by residues 27 to 29 (EVR) and Arg53. The active-site Proton donor/acceptor is the His111. Lys138 (schiff-base intermediate with substrate) is an active-site residue. Residues Arg175 and Gln197 each contribute to the 3-dehydroquinate site.

This sequence belongs to the type-I 3-dehydroquinase family. In terms of assembly, homodimer.

It catalyses the reaction 3-dehydroquinate = 3-dehydroshikimate + H2O. It participates in metabolic intermediate biosynthesis; chorismate biosynthesis; chorismate from D-erythrose 4-phosphate and phosphoenolpyruvate: step 3/7. Its function is as follows. Involved in the third step of the chorismate pathway, which leads to the biosynthesis of aromatic amino acids. Catalyzes the cis-dehydration of 3-dehydroquinate (DHQ) and introduces the first double bond of the aromatic ring to yield 3-dehydroshikimate. This is 3-dehydroquinate dehydratase from Thermococcus gammatolerans (strain DSM 15229 / JCM 11827 / EJ3).